Here is a 273-residue protein sequence, read N- to C-terminus: Putative ABC transporter ATP-binding protein DVU_1056 (273 aa).

One can recognise an ABC transporter domain in the interval 10-242 (LSLDDIHFTY…IHHGGEVAHE (233 aa)). 44–51 (GHNGSGKT) contributes to the ATP binding site. The tract at residues 234–273 (HHGGEVAHEHPSRGCCHQHDGSHHHAGHDDDHPHTSQTTE) is disordered. Over residues 235–267 (HGGEVAHEHPSRGCCHQHDGSHHHAGHDDDHPH) the composition is skewed to basic and acidic residues.

Belongs to the ABC transporter superfamily.

It is found in the cell inner membrane. Its function is as follows. Probably part of an ABC transporter complex. Responsible for energy coupling to the transport system. In Nitratidesulfovibrio vulgaris (strain ATCC 29579 / DSM 644 / CCUG 34227 / NCIMB 8303 / VKM B-1760 / Hildenborough) (Desulfovibrio vulgaris), this protein is Putative ABC transporter ATP-binding protein DVU_1056.